The chain runs to 149 residues: MSNESNDLEKNISHLDPTGVDNAYIPPEQPETKHSRFNIDRDTLRNHFIAAVGEFCGTFMFLWCAYVICNVANHDVALTTEPEGSHPGQLIMIALGFGFSVMFSIWCFWWGFEPSRFSLFVFGQSHLTSQMCSDVVSSDHCWDGCWWCR.

The segment at 1 to 35 (MSNESNDLEKNISHLDPTGVDNAYIPPEQPETKHS) is disordered. Over 1–47 (MSNESNDLEKNISHLDPTGVDNAYIPPEQPETKHSRFNIDRDTLRNH) the chain is Cytoplasmic. Residues 48-68 (FIAAVGEFCGTFMFLWCAYVI) form a helical membrane-spanning segment. The Extracellular portion of the chain corresponds to 69 to 89 (CNVANHDVALTTEPEGSHPGQ). The helical transmembrane segment at 90–110 (LIMIALGFGFSVMFSIWCFWW) threads the bilayer. Residues 111-149 (GFEPSRFSLFVFGQSHLTSQMCSDVVSSDHCWDGCWWCR) are Cytoplasmic-facing.

Belongs to the MIP/aquaporin (TC 1.A.8) family.

It is found in the endoplasmic reticulum membrane. The protein localises to the cell membrane. Water channel required to facilitate the transport of water across membranes. Involved in freeze tolerance, osmotolerance and cell flocculation in liquid cultures. Is non-functional in most laboratory strains. This Saccharomyces cerevisiae (strain JAY291) (Baker's yeast) protein is Aquaporin-like protein 2 (AQY2-2).